The sequence spans 131 residues: Putative gamma-taxilin 2 (131 aa).

It belongs to the taxilin family.

This is Putative gamma-taxilin 2 (TXLNGY) from Pan troglodytes (Chimpanzee).